Reading from the N-terminus, the 84-residue chain is Beta-cardiotoxin CTX15 (84 aa).

The signal sequence occupies residues 1–21 (MKTLLLTLVVVTIVCLDLGYT). Intrachain disulfides connect C24-C43, C36-C61, C65-C76, and C77-C82.

This sequence belongs to the three-finger toxin family. Short-chain subfamily. Aminergic toxin sub-subfamily. As to expression, expressed by the venom gland.

It localises to the secreted. Its function is as follows. Acts as a beta-blocker by binding to beta-1 and beta-2 adrenergic receptors (ADRB1 and ADRB2). It dose-dependently decreases the heart rate (bradycardia), whereas conventional cardiotoxins increases it. At 100 mg/kg, intraperitoneal injection into mice provokes labored breathing, impaired locomotion, lack of response to external stimuli, and death (after 30 minutes). The sequence is that of Beta-cardiotoxin CTX15 from Ophiophagus hannah (King cobra).